An 867-amino-acid polypeptide reads, in one-letter code: Coiled-coil domain-containing protein 80 (867 aa).

The signal sequence occupies residues 1–18 (MRARYMLGFGVLCLLTWA). Disordered stretches follow at residues 83 to 121 (RKVLAQRRPAQGGTRNPIQQDDGTPGARARVSRMPSSAG) and 282 to 539 (DSQV…GTLA). The span at 95–104 (GTRNPIQQDD) shows a compositional bias: polar residues. The span at 288 to 297 (PTERRKEIRK) shows a compositional bias: basic and acidic residues. Low complexity predominate over residues 301-370 (RPTTTTTPAP…PRTTRANTTP (70 aa)). A compositionally biased stretch (basic and acidic residues) spans 401 to 412 (ARYRDNHTSKKE). A compositionally biased stretch (basic residues) spans 426 to 435 (KPTKVRPTKK). Residues 436–451 (KNGDKDISNAYEEKYD) are compositionally biased toward basic and acidic residues. Positions 471-483 (KRGKGKTDKKKKK) are enriched in basic residues. 2 stretches are compositionally biased toward basic and acidic residues: residues 484–504 (DKTDKLSKKDKAERRGKDGKG) and 514–523 (KILEKEDYQK).

This sequence belongs to the CCDC80 family. Binds to various extracellular matrix proteins.

The protein resides in the secreted. It localises to the extracellular space. The protein localises to the extracellular matrix. Promotes cell adhesion and matrix assembly. The chain is Coiled-coil domain-containing protein 80 (ccdc80) from Danio rerio (Zebrafish).